Here is a 259-residue protein sequence, read N- to C-terminus: Mediator of RNA polymerase II transcription subunit 7 (259 aa).

3 disordered regions span residues 1–52, 99–118, and 223–242; these read MAEP…EWSP, TQLY…SSQP, and GSTI…EDQI. Residues 31-44 are compositionally biased toward basic and acidic residues; it reads ENIKKEASKGEDGR. Residues 230 to 242 show a composition bias toward basic and acidic residues; the sequence is TKDKKGVKPEDQI.

Belongs to the Mediator complex subunit 7 family. Component of the Mediator complex.

Its subcellular location is the nucleus. In terms of biological role, component of the Mediator complex, a coactivator involved in the regulated transcription of nearly all RNA polymerase II-dependent genes. Mediator functions as a bridge to convey information from gene-specific regulatory proteins to the basal RNA polymerase II transcription machinery. Mediator is recruited to promoters by direct interactions with regulatory proteins and serves as a scaffold for the assembly of a functional preinitiation complex with RNA polymerase II and the general transcription factors. The chain is Mediator of RNA polymerase II transcription subunit 7 (med7) from Emericella nidulans (strain FGSC A4 / ATCC 38163 / CBS 112.46 / NRRL 194 / M139) (Aspergillus nidulans).